The primary structure comprises 301 residues: NADH-ubiquinone oxidoreductase chain 1 (301 aa).

8 helical membrane passes run 4–24, 62–82, 96–116, 140–160, 165–185, 216–236, 247–267, and 279–299; these read IIPI…VLGY, LALF…MWIP, ILFM…SGWA, LAII…STLI, YTWL…STIA, LFFL…IILF, EMYT…FLWI, and LMHL…MWHV.

This sequence belongs to the complex I subunit 1 family.

Its subcellular location is the mitochondrion inner membrane. The catalysed reaction is a ubiquinone + NADH + 5 H(+)(in) = a ubiquinol + NAD(+) + 4 H(+)(out). In terms of biological role, core subunit of the mitochondrial membrane respiratory chain NADH dehydrogenase (Complex I) that is believed to belong to the minimal assembly required for catalysis. Complex I functions in the transfer of electrons from NADH to the respiratory chain. The immediate electron acceptor for the enzyme is believed to be ubiquinone. This is NADH-ubiquinone oxidoreductase chain 1 (MT-ND1) from Nyctalus noctula (Noctule bat).